The following is a 151-amino-acid chain: UPF0756 membrane protein GWCH70_2680 (151 aa).

Transmembrane regions (helical) follow at residues 5 to 25 (ILFL…SLMI), 53 to 73 (WGVT…EIGF), 86 to 106 (WIAL…VTLL), and 116 to 136 (LVFG…GPLI).

This sequence belongs to the UPF0756 family.

It localises to the cell membrane. The sequence is that of UPF0756 membrane protein GWCH70_2680 from Geobacillus sp. (strain WCH70).